The chain runs to 128 residues: Glycophorin-C (128 aa).

Over residues M1 to W12 the composition is skewed to polar residues. The interval M1–R48 is disordered. The Extracellular segment spans residues M1–M57. S3 carries an O-linked (GalNAc...) serine glycan. T4 is a glycosylation site (O-linked (GalNAc...) threonine). The O-linked (GalNAc...) serine glycan is linked to S6. Residue N8 is glycosylated (N-linked (GlcNAc...) asparagine). A glycan (O-linked (GalNAc...) serine) is linked at S9. T10 carries an O-linked (GalNAc...) threonine glycan. S15, S24, and S26 each carry an O-linked (GalNAc...) serine glycan. Residues M22–T33 show a composition bias toward low complexity. O-linked (GalNAc...) threonine glycosylation is found at T27, T28, T31, T32, and T33. An O-linked (GalNAc...) serine glycan is attached at S42. A helical; Signal-anchor for type III membrane protein membrane pass occupies residues D58–L81. At R82–I128 the chain is on the cytoplasmic side. 2 positions are modified to phosphoserine: S104 and S122. The tract at residues A108 to I128 is disordered.

This sequence belongs to the glycophorin-C family. In terms of processing, O-glycosylated with core 1 or possibly core 8 glycans. As to expression, glycophorin-C is expressed in erythrocytes. Glycophorin-D and IsoGPC are ubiquitously expressed.

It is found in the cell membrane. In terms of biological role, this protein is a minor sialoglycoprotein in human erythrocyte membranes. The blood group Gerbich antigens and receptors for Plasmodium falciparum merozoites are most likely located within the extracellular domain. Glycophorin-C plays an important role in regulating the stability of red cells. In Homo sapiens (Human), this protein is Glycophorin-C (GYPC).